The primary structure comprises 46 residues: Daisho2 (46 aa).

The N-terminal stretch at Met-1–Ala-22 is a signal peptide.

In terms of tissue distribution, hemolymph (at protein level).

It is found in the secreted. Its function is as follows. Peptide which plays a role in the humoral immune response to a subset of filamentous fungi, including F.oxysporum and F.verticillioides. The chain is Daisho2 from Drosophila melanogaster (Fruit fly).